The following is a 204-amino-acid chain: MEHAEHGNSNAPMEYQSETGRLNILGFWIFLGAEIVLFSTLFATFFVLQNRTAGGVLPDELFEVNLVMIMTFLLLISSFTCGIAVHEMRRGSLKGVVIWTIITLLLGAGFVGCEINEFVHYVHEGASLGTSAFWSGFFVLLGTHGTHVTIGIFWIIGILIQLKKRGLTPQTSSKIFISSLYWHFLDVVWIFIFTGVYLMGLGGL.

5 helical membrane-spanning segments follow: residues 27–47, 66–86, 95–115, 140–160, and 184–204; these read FWIF…TFFV, LVMI…IAVH, GVVI…GCEI, LLGT…GILI, and FLDV…LGGL.

The protein belongs to the cytochrome c oxidase subunit 3 family.

Its subcellular location is the cell membrane. It carries out the reaction 2 a quinol + O2 = 2 a quinone + 2 H2O. Functionally, catalyzes quinol oxidation with the concomitant reduction of oxygen to water. Major component for energy conversion during vegetative growth. The protein is Quinol oxidase subunit 3 (qoxC) of Bacillus spizizenii (strain ATCC 23059 / NRRL B-14472 / W23) (Bacillus subtilis subsp. spizizenii).